Consider the following 37-residue polypeptide: Large ribosomal subunit protein bL36 (37 aa).

The protein belongs to the bacterial ribosomal protein bL36 family.

The chain is Large ribosomal subunit protein bL36 from Staphylococcus epidermidis (strain ATCC 35984 / DSM 28319 / BCRC 17069 / CCUG 31568 / BM 3577 / RP62A).